We begin with the raw amino-acid sequence, 152 residues long: Superoxide dismutase [Cu-Zn] 2 (152 aa).

Cu cation contacts are provided by His45, His47, and His62. A disulfide bridge connects residues Cys56 and Cys145. The Zn(2+) site is built by His62, His70, His79, and Asp82. His119 lines the Cu cation pocket.

Belongs to the Cu-Zn superoxide dismutase family. In terms of assembly, homodimer. Cu cation is required as a cofactor. It depends on Zn(2+) as a cofactor.

It is found in the cytoplasm. It carries out the reaction 2 superoxide + 2 H(+) = H2O2 + O2. Its function is as follows. Destroys radicals which are normally produced within the cells and which are toxic to biological systems. This Oryza sativa subsp. japonica (Rice) protein is Superoxide dismutase [Cu-Zn] 2 (SODCC2).